A 100-amino-acid chain; its full sequence is Aspartyl/glutamyl-tRNA(Asn/Gln) amidotransferase subunit C (100 aa).

This sequence belongs to the GatC family. In terms of assembly, heterotrimer of A, B and C subunits.

The catalysed reaction is L-glutamyl-tRNA(Gln) + L-glutamine + ATP + H2O = L-glutaminyl-tRNA(Gln) + L-glutamate + ADP + phosphate + H(+). The enzyme catalyses L-aspartyl-tRNA(Asn) + L-glutamine + ATP + H2O = L-asparaginyl-tRNA(Asn) + L-glutamate + ADP + phosphate + 2 H(+). Functionally, allows the formation of correctly charged Asn-tRNA(Asn) or Gln-tRNA(Gln) through the transamidation of misacylated Asp-tRNA(Asn) or Glu-tRNA(Gln) in organisms which lack either or both of asparaginyl-tRNA or glutaminyl-tRNA synthetases. The reaction takes place in the presence of glutamine and ATP through an activated phospho-Asp-tRNA(Asn) or phospho-Glu-tRNA(Gln). The polypeptide is Aspartyl/glutamyl-tRNA(Asn/Gln) amidotransferase subunit C (Staphylococcus saprophyticus subsp. saprophyticus (strain ATCC 15305 / DSM 20229 / NCIMB 8711 / NCTC 7292 / S-41)).